We begin with the raw amino-acid sequence, 444 residues long: CCA-adding enzyme (444 aa).

2 residues coordinate ATP: Ser57 and Arg60. CTP is bound by residues Ser57 and Arg60. Residues Asp69, Asp71, and Asp124 each contribute to the Mg(2+) site. Positions 147, 168, and 177 each coordinate ATP. CTP is bound by residues His147, Lys168, and Tyr177.

It belongs to the tRNA nucleotidyltransferase/poly(A) polymerase family. Archaeal CCA-adding enzyme subfamily. In terms of assembly, homodimer. The cofactor is Mg(2+).

The enzyme catalyses a tRNA precursor + 2 CTP + ATP = a tRNA with a 3' CCA end + 3 diphosphate. The catalysed reaction is a tRNA with a 3' CCA end + 2 CTP + ATP = a tRNA with a 3' CCACCA end + 3 diphosphate. In terms of biological role, catalyzes the addition and repair of the essential 3'-terminal CCA sequence in tRNAs without using a nucleic acid template. Adds these three nucleotides in the order of C, C, and A to the tRNA nucleotide-73, using CTP and ATP as substrates and producing inorganic pyrophosphate. tRNA 3'-terminal CCA addition is required both for tRNA processing and repair. Also involved in tRNA surveillance by mediating tandem CCA addition to generate a CCACCA at the 3' terminus of unstable tRNAs. While stable tRNAs receive only 3'-terminal CCA, unstable tRNAs are marked with CCACCA and rapidly degraded. This is CCA-adding enzyme from Methanococcus maripaludis (strain C7 / ATCC BAA-1331).